The sequence spans 701 residues: uncharacterized protein (701 aa).

This is an uncharacterized protein from Saccharomyces cerevisiae (strain ATCC 204508 / S288c) (Baker's yeast).